The chain runs to 77 residues: MKLTCMMIVAVLFLTAWTFVTADDSGNGLENLFSKAHHEMKNPEASNLNKRCAPFLHPCTFFFPNCCNSYCVQFICL.

Positions 1 to 22 are cleaved as a signal peptide; it reads MKLTCMMIVAVLFLTAWTFVTA. A propeptide spanning residues 23–49 is cleaved from the precursor; the sequence is DDSGNGLENLFSKAHHEMKNPEASNLN. Cystine bridges form between Cys52/Cys67, Cys59/Cys71, and Cys66/Cys76. Cys76 carries the cysteine amide modification.

It belongs to the conotoxin O1 superfamily. Expressed by the venom duct.

It is found in the secreted. This Conus textile (Cloth-of-gold cone) protein is Conotoxin King-Kong 2.